The following is a 384-amino-acid chain: S-adenosylmethionine synthase (384 aa).

Position 15 (histidine 15) interacts with ATP. Mg(2+) is bound at residue aspartate 17. Residue glutamate 43 coordinates K(+). Positions 56 and 99 each coordinate L-methionine. The flexible loop stretch occupies residues 99–109 (QSPDINQGVDR). ATP-binding positions include 164–166 (DAK), 230–231 (RF), aspartate 239, 245–246 (RK), alanine 262, and lysine 266. Aspartate 239 contacts L-methionine. Lysine 270 lines the L-methionine pocket.

It belongs to the AdoMet synthase family. Homotetramer; dimer of dimers. Mg(2+) serves as cofactor. K(+) is required as a cofactor.

The protein resides in the cytoplasm. It catalyses the reaction L-methionine + ATP + H2O = S-adenosyl-L-methionine + phosphate + diphosphate. The protein operates within amino-acid biosynthesis; S-adenosyl-L-methionine biosynthesis; S-adenosyl-L-methionine from L-methionine: step 1/1. Functionally, catalyzes the formation of S-adenosylmethionine (AdoMet) from methionine and ATP. The overall synthetic reaction is composed of two sequential steps, AdoMet formation and the subsequent tripolyphosphate hydrolysis which occurs prior to release of AdoMet from the enzyme. This Salmonella choleraesuis (strain SC-B67) protein is S-adenosylmethionine synthase.